The following is a 975-amino-acid chain: Chromosome transmission fidelity protein 18 homolog (975 aa).

2 disordered regions span residues 30–83 and 114–141; these read EGAS…KRQV and SEEM…DLAE. The residue at position 51 (Thr51) is a Phosphothreonine. A compositionally biased stretch (low complexity) spans 58–77; that stretch reads RGDAASSPAPAASVGSSQGG. At Ser64 the chain carries Phosphoserine. Over residues 122–136 the composition is skewed to pro residues; it reads PPDSSPTDITPPPSP. Phosphoserine is present on Ser225. Disordered stretches follow at residues 246 to 276 and 320 to 346; these read SDTL…GQDA and RPSR…KWKS. 374–381 is a binding site for ATP; that stretch reads GPPGLGKT. A disordered region spans residues 858–896; the sequence is ASARVENSPQVDGSPPGLEGLLGGIGEKGVHRPAPRNHE. Ser871 carries the post-translational modification Phosphoserine.

Belongs to the activator 1 small subunits family. CTF18 subfamily. As to quaternary structure, component of the CTF18-RFC complex, which consists of CTF18, CTF8, DCC1, RFC2, RFC3, RFC4 and RFC5. During assembly of the CTF18-RFC complex, CTF18 may first assemble into a subcomplex with RFC2, RFC3, RFC4 and RFC5. CTF18 then interacts directly with CTF8, which in turn interacts with DCC1. The CTF18-RFC complex associates with PCNA and with DNA polymerase POLH. The CTF18-RFC complex does not interact with the Rad9/Rad1/Hus1 complex. CTF18 interacts with SMC1A and RAD21. Interacts with DDX11.

The protein localises to the nucleus. Chromosome cohesion factor involved in sister chromatid cohesion and fidelity of chromosome transmission. Component of one of the cell nuclear antigen loader complexes, CTF18-replication factor C (CTF18-RFC), which consists of CTF18, CTF8, DCC1, RFC2, RFC3, RFC4 and RFC5. The CTF18-RFC complex binds to single-stranded and primed DNAs and has weak ATPase activity that is stimulated by the presence of primed DNA, replication protein A (RPA) and by proliferating cell nuclear antigen (PCNA). The CTF18-RFC complex catalyzes the ATP-dependent loading of PCNA onto primed and gapped DNA. Interacts with and stimulates DNA polymerase POLH. During DNA repair synthesis, involved in loading DNA polymerase POLE at the sites of local damage. The chain is Chromosome transmission fidelity protein 18 homolog (CHTF18) from Homo sapiens (Human).